We begin with the raw amino-acid sequence, 931 residues long: Probable ubiquitin-like-specific protease 2B (931 aa).

A disordered region spans residues 204–224 (SLSDRSALSEASDSEDDEEDW). The span at 215–224 (SDSEDDEEDW) shows a compositional bias: acidic residues. Residues His489, Asp522, and Cys577 contribute to the active site. The segment at 825–931 (HEEEIDESPP…PTGEAEEMEK (107 aa)) is disordered. Over residues 839–851 (SLKSATVGSNTAD) the composition is skewed to polar residues. A compositionally biased stretch (basic and acidic residues) spans 873 to 904 (NDRDEEKPLEHDLEIGDKTSEDVGDDCDQKEP).

Belongs to the peptidase C48 family.

In terms of biological role, protease that catalyzes two essential functions in the SUMO pathway: processing of full-length SUMOs to their mature forms and deconjugation of SUMO from targeted proteins. The protein is Probable ubiquitin-like-specific protease 2B (ULP2B) of Arabidopsis thaliana (Mouse-ear cress).